The sequence spans 450 residues: Succinate-semialdehyde dehydrogenase (450 aa).

119 to 120 (WN) lines the NADP(+) pocket. Arginine 128 is a binding site for substrate. NADP(+)-binding positions include 143–146 (KPAK) and 197–198 (GS). The Proton acceptor role is filled by glutamate 219. Leucine 220 contributes to the NADP(+) binding site. 2 residues coordinate substrate: arginine 247 and cysteine 253. The active-site Nucleophile is the cysteine 253. Residue glutamate 350 participates in NADP(+) binding. Serine 410 is a binding site for substrate.

It belongs to the aldehyde dehydrogenase family. In terms of assembly, homodimer.

It carries out the reaction succinate semialdehyde + NAD(+) + H2O = succinate + NADH + 2 H(+). It catalyses the reaction succinate semialdehyde + NADP(+) + H2O = succinate + NADPH + 2 H(+). Its pathway is alkaloid degradation; nicotine degradation. Its function is as follows. Catalyzes the NAD(P)(+)-dependent oxidation of succinate semialdehyde to succinate, which may enter the citric acid cycle. Is involved in the catabolism of 4-methylaminobutanoate produced from nicotine. Acts preferentially with NADP(+) as cosubstrate but can also use NAD(+). To a lesser extent, is active also towards butyraldehyde (8.5% of the activity observed with succinate semialdehyde) and propionaldehyde (1.6% of the activity observed with succinate semialdehyde) as substrates. The chain is Succinate-semialdehyde dehydrogenase (sad) from Paenarthrobacter nicotinovorans (Arthrobacter nicotinovorans).